The primary structure comprises 433 residues: Putative wall-associated receptor kinase-like 16 (433 aa).

Positions 1 to 22 (MKLQHVVYLVAIFFVVAIFVIA) are cleaved as a signal peptide. The Extracellular segment spans residues 23 to 29 (CIEENKY). The chain crosses the membrane as a helical span at residues 30-50 (LVWIMIILANTTNILSLVRSI). At 51–433 (SYIKNIRKHQ…VARFDIEAGR (383 aa)) the chain is on the cytoplasmic side. The residue at position 97 (T97) is a Phosphothreonine. In terms of domain architecture, Protein kinase spans 108–391 (YDVSRILGQG…RAKTTKHNWL (284 aa)). ATP-binding positions include 114-122 (LGQGGQWTV) and K136. Y181 carries the phosphotyrosine modification. The active-site Proton acceptor is the D233. 2 positions are modified to phosphothreonine: T267 and T272. Residue Y280 is modified to Phosphotyrosine.

It belongs to the protein kinase superfamily. Ser/Thr protein kinase family.

The protein localises to the membrane. The catalysed reaction is L-seryl-[protein] + ATP = O-phospho-L-seryl-[protein] + ADP + H(+). It carries out the reaction L-threonyl-[protein] + ATP = O-phospho-L-threonyl-[protein] + ADP + H(+). Putative serine/threonine-protein kinase that may function as a signaling receptor of extracellular matrix component. In Arabidopsis thaliana (Mouse-ear cress), this protein is Putative wall-associated receptor kinase-like 16 (WAKL16).